The primary structure comprises 591 residues: L-fucose isomerase (591 aa).

Residues Glu337 and Asp361 each act as proton acceptor in the active site. Mn(2+) is bound by residues Glu337, Asp361, and His528.

Belongs to the L-fucose isomerase family. In terms of assembly, homohexamer. Mn(2+) serves as cofactor.

Its subcellular location is the cytoplasm. The enzyme catalyses L-fucose = L-fuculose. Its pathway is carbohydrate degradation; L-fucose degradation; L-lactaldehyde and glycerone phosphate from L-fucose: step 1/3. Its function is as follows. Converts the aldose L-fucose into the corresponding ketose L-fuculose. In Escherichia coli O6:K15:H31 (strain 536 / UPEC), this protein is L-fucose isomerase.